The sequence spans 399 residues: Phosphoglycerate kinase (399 aa).

Residues 24–26, Arg-41, 64–67, Arg-123, and Arg-160 contribute to the substrate site; these read DLN and HLGR. ATP-binding positions include Lys-210, Gly-298, Glu-329, and 355-358; that span reads GGDS.

The protein belongs to the phosphoglycerate kinase family. As to quaternary structure, monomer.

Its subcellular location is the cytoplasm. The enzyme catalyses (2R)-3-phosphoglycerate + ATP = (2R)-3-phospho-glyceroyl phosphate + ADP. Its pathway is carbohydrate degradation; glycolysis; pyruvate from D-glyceraldehyde 3-phosphate: step 2/5. The chain is Phosphoglycerate kinase from Salinispora tropica (strain ATCC BAA-916 / DSM 44818 / JCM 13857 / NBRC 105044 / CNB-440).